The sequence spans 183 residues: Streptavidin-V1 (183 aa).

Positions 1–24 (MRKIVVAAIAVSLTTVSITASASA) are cleaved as a signal peptide. Residues 37–159 (AEAGITGTWY…GHDTFTKVKP (123 aa)) enclose the Avidin-like domain. Residues tyrosine 67 and tyrosine 78 each coordinate biotin. Positions 83-85 (RYD) match the Cell attachment site; atypical motif. Biotin-binding residues include tryptophan 116, tryptophan 132, and tryptophan 144.

Belongs to the avidin/streptavidin family. As to quaternary structure, homotetramer.

The protein localises to the secreted. The biological function of streptavidin is not known. Forms a strong non-covalent specific complex with biotin (one molecule of biotin per subunit of streptavidin). This Streptomyces violaceus (Streptomyces venezuelae) protein is Streptavidin-V1.